The chain runs to 89 residues: Small ribosomal subunit protein uS15 (89 aa).

The protein belongs to the universal ribosomal protein uS15 family. Part of the 30S ribosomal subunit. Forms a bridge to the 50S subunit in the 70S ribosome, contacting the 23S rRNA.

One of the primary rRNA binding proteins, it binds directly to 16S rRNA where it helps nucleate assembly of the platform of the 30S subunit by binding and bridging several RNA helices of the 16S rRNA. Functionally, forms an intersubunit bridge (bridge B4) with the 23S rRNA of the 50S subunit in the ribosome. This is Small ribosomal subunit protein uS15 from Acinetobacter baumannii (strain AB307-0294).